The primary structure comprises 154 residues: Insulin-like peptide 1 (154 aa).

The N-terminal stretch at 1–29 is a signal peptide; the sequence is MFSQHNGAAVHGLRLQSLLIAAMLTAAMA. 3 disulfide bridges follow: C49-C138, C61-C151, and C137-C142. The tract at residues 72–92 is disordered; sequence RESLLGNSDDDEDTEQEVQDD. A propeptide spans 73 to 122 (connecting peptide); the sequence is ESLLGNSDDDEDTEQEVQDDSSMWQTLDGAGYSFSPLLTNLYGSEVLIKM. Over residues 79 to 91 the composition is skewed to acidic residues; that stretch reads SDDDEDTEQEVQD.

It belongs to the insulin family. In terms of assembly, heterodimer of a B chain and an A chain linked by two disulfide bonds.

Its subcellular location is the secreted. In terms of biological role, possible ligand of InR/insulin-like receptor. In Drosophila melanogaster (Fruit fly), this protein is Insulin-like peptide 1.